Consider the following 553-residue polypeptide: Sulfatase (553 aa).

A signal peptide spans 1–25 (MTSEMKKFSKIVLFGLLISPLLASS). The Ca(2+) site is built by Asp-43, Asp-44, and Cys-88. Cys-88 (nucleophile) is an active-site residue. Cys-88 is modified (3-oxoalanine (Cys)). The active site involves His-159. Ca(2+) contacts are provided by Asp-350 and Asn-351.

This sequence belongs to the sulfatase family. The cofactor is Ca(2+). The conversion to 3-oxoalanine (also known as C-formylglycine, FGly), of a serine or cysteine residue in prokaryotes and of a cysteine residue in eukaryotes, is critical for catalytic activity. This post-translational modification is severely defective in multiple sulfatase deficiency (MSD).

It is found in the secreted. In terms of biological role, sulfatase that may be involved in ulvan degradation. Ulvan is the main polysaccharide component of the Ulvales (green seaweed) cell wall. It is composed of disaccharide building blocks comprising 3-sulfated rhamnose (Rha3S) linked to D-glucuronic acid (GlcA), L-iduronic acid (IduA), or D-xylose (Xyl). This Formosa agariphila (strain DSM 15362 / KCTC 12365 / LMG 23005 / KMM 3901 / M-2Alg 35-1) protein is Sulfatase.